The sequence spans 1447 residues: Netrin receptor DCC (1447 aa).

Positions 1-25 (MENSLRCVWVPKLAFVLFGASLFSA) are cleaved as a signal peptide. Ig-like C2-type domains lie at 26–135 (HLQV…AKVA), 139–229 (PLRF…AEVR), 234–326 (PGLH…AELT), and 331–416 (PWFL…AQLI). Residues 26–1097 (HLQVTGFQIK…GSVTPQKNSN (1072 aa)) lie on the Extracellular side of the membrane. Intrachain disulfides connect C61/C117, C161/C212, and C261/C310. N94 carries N-linked (GlcNAc...) asparagine glycosylation. N-linked (GlcNAc...) asparagine glycans are attached at residues N299 and N318. Residues C352 and C400 are joined by a disulfide bond. Fibronectin type-III domains lie at 431 to 524 (APRD…TQPE), 530 to 620 (PVEN…TLSD), 625 to 718 (PPQN…TPEN), 728 to 821 (QPSS…TDPT), 846 to 942 (PPVG…TYEA), and 947 to 1044 (APKD…TLKV). N478 is a glycosylation site (N-linked (GlcNAc...) asparagine). N628 and N702 each carry an N-linked (GlcNAc...) asparagine glycan. A helical transmembrane segment spans residues 1098–1122 (LLVIIVVTVGVITVLVVVIVAVICT). Residues 1123-1447 (RRSSAQQRKK…QLNAITGSAF (325 aa)) lie on the Cytoplasmic side of the membrane. Disordered regions lie at residues 1126–1152 (SAQQRKKRATHSAGKRKGSQKDLRPPD) and 1165–1222 (IEKP…TLER). Residues 1129 to 1143 (QRKKRATHSAGKRKG) are compositionally biased toward basic residues. S1178 carries the phosphoserine; by MAPK1 modification. The segment covering 1179–1221 (PIQSCQDLTPVSHSQSETQLGSKSTSHSGQDTEEAGSSMSTLE) has biased composition (polar residues). A Phosphothreonine; by MAPK1 modification is found at T1187. S1267 carries the post-translational modification Phosphoserine; by MAPK1. 2 disordered regions span residues 1288-1330 (SVDR…PSRT) and 1394-1419 (LLPVSVPTAPEVSEESHKPTEDSANV). The span at 1297–1310 (RSQSVSEGPTTQQP) shows a compositional bias: polar residues. The tract at residues 1432-1439 (LEGLMKQL) is interaction with MYO10.

The protein belongs to the immunoglobulin superfamily. DCC family. In terms of assembly, interacts with the cytoplasmic part of UNC5A, UNC5B, UNC5C and probably UNC5D. Interacts with DSCAM. Interacts with PTK2/FAK1 and MAPK1. Interacts with NTN1. Interacts with MYO10. Interacts with CBLN4; this interaction can be competed by NTN1. Interacts with SIAH1 and SIAH2. In terms of processing, ubiquitinated; mediated by SIAH1 or SIAH2 and leading to its subsequent proteasomal degradation. In terms of tissue distribution, found in axons of the central and peripheral nervous system and in differentiated cell types of the intestine. Not expressed in colorectal tumor cells that lost their capacity to differentiate into mucus producing cells.

Its subcellular location is the membrane. Its function is as follows. Receptor for netrin required for axon guidance. Mediates axon attraction of neuronal growth cones in the developing nervous system upon ligand binding. Its association with UNC5 proteins may trigger signaling for axon repulsion. It also acts as a dependence receptor required for apoptosis induction when not associated with netrin ligand. Implicated as a tumor suppressor gene. This Homo sapiens (Human) protein is Netrin receptor DCC (DCC).